A 75-amino-acid polypeptide reads, in one-letter code: Small ribosomal subunit protein bS18 (75 aa).

The protein belongs to the bacterial ribosomal protein bS18 family. As to quaternary structure, part of the 30S ribosomal subunit. Forms a tight heterodimer with protein bS6.

Binds as a heterodimer with protein bS6 to the central domain of the 16S rRNA, where it helps stabilize the platform of the 30S subunit. This chain is Small ribosomal subunit protein bS18, found in Buchnera aphidicola subsp. Cinara cedri (strain Cc).